Here is a 77-residue protein sequence, read N- to C-terminus: U8-lycotoxin-Ls1b (77 aa).

The signal sequence occupies residues 1–20 (MKLIIFTGLVLFAIVSLIEA). The propeptide occupies 21–26 (QAENEK).

Belongs to the neurotoxin 19 (CSTX) family. 08 (U8-Lctx) subfamily. In terms of processing, contains 4 disulfide bonds. In terms of tissue distribution, expressed by the venom gland.

It localises to the secreted. The sequence is that of U8-lycotoxin-Ls1b from Lycosa singoriensis (Wolf spider).